We begin with the raw amino-acid sequence, 494 residues long: Sphingosine-1-phosphate transporter MFSD2B (494 aa).

The span at 1–12 shows a compositional bias: pro residues; it reads MSVPHGPTPAPV. The segment at 1-26 is disordered; sequence MSVPHGPTPAPVAEPHTQEPGSDKRD. 10 helical membrane passes run 103 to 123, 140 to 160, 179 to 199, 223 to 243, 277 to 297, 310 to 330, 339 to 359, 360 to 380, 402 to 422, and 449 to 469; these read LMPW…FLWF, CLFQ…TMIL, MAGT…AHGS, IAAA…CLGV, VVSF…LVLF, NLVL…EWVL, AFGI…PSAP, VAYV…LLPW, TIFY…ALGI, and VLIG…LLVG. A disordered region spans residues 473–494; the sequence is KMPRQDTSSQLSLRRRTSYSLA. The segment covering 485-494 has biased composition (basic residues); sequence LRRRTSYSLA.

It belongs to the major facilitator superfamily. As to expression, widely expressed with highest expression in spleen, lung and testis. Predominantly expressed in erythroid lineages giving rise to erythrocytes and platelets, but absent in lymphoid lineages.

Its subcellular location is the cell membrane. The enzyme catalyses sphing-4-enine 1-phosphate(in) = sphing-4-enine 1-phosphate(out). The catalysed reaction is sphinganine 1-phosphate(in) = sphinganine 1-phosphate(out). It catalyses the reaction sphinga-4E,14Z-dienine-1-phosphate(in) = sphinga-4E,14Z-dienine-1-phosphate(out). In terms of biological role, lipid transporter that specifically mediates export of sphingosine-1-phosphate in red blood cells and platelets. Sphingosine-1-phosphate is a signaling sphingolipid and its export from red blood cells into in the plasma is required for red blood cell morphology. Sphingosine-1-phosphate export from platelets is required for platelet aggregation and thrombus formation. Mediates the export of different sphingosine-1-phosphate (S1P) species, including S1P(d18:0) (sphinganine 1-phosphate), S1P (d18:1) (sphing-4-enine 1-phosphate) and S1P (d18:2) (sphinga-4E,14Z-dienine-1-phosphate). Release of sphingosine-1-phosphate is facilitated by a proton gradient. In contrast, cations, such as sodium, are not required to drive sphingosine-1-phosphate transport. In addition to export, also able to mediate S1P import. Does not transport lysophosphatidylcholine (LPC). The polypeptide is Sphingosine-1-phosphate transporter MFSD2B (Mus musculus (Mouse)).